The sequence spans 411 residues: Argininosuccinate synthase (411 aa).

ATP is bound by residues 10-18 and A37; that span reads AYSGGLDTS. L-citrulline contacts are provided by Y89 and S94. Residue G119 coordinates ATP. T121, N125, and D126 together coordinate L-aspartate. An L-citrulline-binding site is contributed by N125. L-citrulline contacts are provided by R129, S178, S187, E263, and Y275.

Belongs to the argininosuccinate synthase family. Type 1 subfamily. In terms of assembly, homotetramer.

It localises to the cytoplasm. The enzyme catalyses L-citrulline + L-aspartate + ATP = 2-(N(omega)-L-arginino)succinate + AMP + diphosphate + H(+). It participates in amino-acid biosynthesis; L-arginine biosynthesis; L-arginine from L-ornithine and carbamoyl phosphate: step 2/3. This chain is Argininosuccinate synthase, found in Aeromonas hydrophila subsp. hydrophila (strain ATCC 7966 / DSM 30187 / BCRC 13018 / CCUG 14551 / JCM 1027 / KCTC 2358 / NCIMB 9240 / NCTC 8049).